The primary structure comprises 113 residues: U11-theraphotoxin-Hhn1a (113 aa).

A signal peptide spans 1–21 (MNTVRVTFLLVFVLAVSLGQA). Positions 22 to 74 (DKDENRMEMQEKAEQGKSYLDFAENLLLQKLEELEAKLLEEDSEESRNSRQKR) are excised as a propeptide. 3 disulfide bridges follow: Cys75–Cys90, Cys82–Cys95, and Cys89–Cys110.

It belongs to the neurotoxin 14 (magi-1) family. 01 (HNTX-16) subfamily. Expressed by the venom gland.

It localises to the secreted. Probable ion channel inhibitor. The sequence is that of U11-theraphotoxin-Hhn1a from Cyriopagopus hainanus (Chinese bird spider).